A 366-amino-acid chain; its full sequence is Dual-specificity RNA methyltransferase RlmN (366 aa).

The active-site Proton acceptor is the E102. Residues D108 to D340 form the Radical SAM core domain. An intrachain disulfide couples C115 to C345. Positions 122, 126, and 129 each coordinate [4Fe-4S] cluster. S-adenosyl-L-methionine-binding positions include G171–E172, S203, S225–H227, and N302. The active-site S-methylcysteine intermediate is the C345.

It belongs to the radical SAM superfamily. RlmN family. The cofactor is [4Fe-4S] cluster.

Its subcellular location is the cytoplasm. The enzyme catalyses adenosine(2503) in 23S rRNA + 2 reduced [2Fe-2S]-[ferredoxin] + 2 S-adenosyl-L-methionine = 2-methyladenosine(2503) in 23S rRNA + 5'-deoxyadenosine + L-methionine + 2 oxidized [2Fe-2S]-[ferredoxin] + S-adenosyl-L-homocysteine. It carries out the reaction adenosine(37) in tRNA + 2 reduced [2Fe-2S]-[ferredoxin] + 2 S-adenosyl-L-methionine = 2-methyladenosine(37) in tRNA + 5'-deoxyadenosine + L-methionine + 2 oxidized [2Fe-2S]-[ferredoxin] + S-adenosyl-L-homocysteine. Its function is as follows. Specifically methylates position 2 of adenine 2503 in 23S rRNA and position 2 of adenine 37 in tRNAs. m2A2503 modification seems to play a crucial role in the proofreading step occurring at the peptidyl transferase center and thus would serve to optimize ribosomal fidelity. This Methylococcus capsulatus (strain ATCC 33009 / NCIMB 11132 / Bath) protein is Dual-specificity RNA methyltransferase RlmN.